The primary structure comprises 261 residues: Cyclin-J18-like (261 aa).

This sequence belongs to the cyclin family.

The polypeptide is Cyclin-J18-like (Oryza sativa subsp. japonica (Rice)).